The sequence spans 158 residues: Protein GLUTAMINE DUMPER 1 (158 aa).

Over 1 to 36 (MRPLSVQSKFEDVATSTSVNHHGVTPQSPWHSPVPY) the chain is Extracellular. The helical transmembrane segment at 37 to 57 (LFGGLAAMLGLIAFALLILAC) threads the bilayer. Residues 58 to 158 (SYWRLSSSGE…DTGETTTTSH (101 aa)) are Cytoplasmic-facing. Residues 65–85 (SGEEDGQNVDEEKESRSGDKA) are disordered. Residues 66-76 (GEEDGQNVDEE) are compositionally biased toward acidic residues. The VIMAG signature appears at 96-100 (VIMAG). The interval 126 to 158 (ISQEESVAKEEEKMREGEEEKVKDTGETTTTSH) is disordered. The segment covering 131-151 (SVAKEEEKMREGEEEKVKDTG) has biased composition (basic and acidic residues).

The protein belongs to the GLUTAMINE DUMPER 1 (TC 9.B.60) family. Interacts with LOG2. Post-translationally, ubiquitinated by LOG2 (in vitro). In terms of tissue distribution, expressed in the vascular tissues and in hydathodes. Expressed in the phloem and xylem (at the protein level).

It is found in the cell membrane. Its function is as follows. Probable subunit of an amino acid transporter involved in the regulation of the amino acid metabolism. Stimulates amino acid export by activating nonselective amino acid facilitators. Required the interaction with the RING-type E3 ubiquitin-protein ligase LOG2 to fulfill its function. Plays a role in the Gln export at hydathodes, at xylem parenchyma into xylem sap and from mesophyll into leaf apoplasm. Acts upstream genes involved in the salicylic acid (SA) pathway and in the geminivirus-host interaction. The chain is Protein GLUTAMINE DUMPER 1 (GDU1) from Arabidopsis thaliana (Mouse-ear cress).